Consider the following 85-residue polypeptide: ATP synthase subunit 9, mitochondrial (85 aa).

2 helical membrane passes run Ile-19–Phe-39 and Ile-61–Ile-81.

Belongs to the ATPase C chain family. As to quaternary structure, F-type ATPases have 2 components, CF(1) - the catalytic core - and CF(0) - the membrane proton channel. CF(1) has five subunits: alpha(3), beta(3), gamma(1), delta(1), epsilon(1). CF(0) has three main subunits: a, b and c.

Its subcellular location is the mitochondrion membrane. This protein is one of the chains of the nonenzymatic membrane component (F0) of mitochondrial ATPase. The chain is ATP synthase subunit 9, mitochondrial (ATP9) from Arabidopsis thaliana (Mouse-ear cress).